A 287-amino-acid chain; its full sequence is Pyridoxal kinase PdxY (287 aa).

Substrate contacts are provided by residues Ser-10 and 45 to 46; that span reads TQ. Residues Asp-112, Ala-144, Glu-149, Lys-182, and 209-212 contribute to the ATP site; that span reads RPLV. Residue Asp-224 coordinates substrate.

It belongs to the pyridoxine kinase family. PdxY subfamily. Homodimer. It depends on Mg(2+) as a cofactor.

The enzyme catalyses pyridoxal + ATP = pyridoxal 5'-phosphate + ADP + H(+). It participates in cofactor metabolism; pyridoxal 5'-phosphate salvage; pyridoxal 5'-phosphate from pyridoxal: step 1/1. In terms of biological role, pyridoxal kinase involved in the salvage pathway of pyridoxal 5'-phosphate (PLP). Catalyzes the phosphorylation of pyridoxal to PLP. This Shigella sonnei (strain Ss046) protein is Pyridoxal kinase PdxY.